We begin with the raw amino-acid sequence, 480 residues long: Cyclin L homolog cyl-1 (480 aa).

The tract at residues 25-58 is disordered; the sequence is PKEQNGNVEPKKEEDEKFESTYKQNENTQITPSS. Residues 33-44 show a composition bias toward basic and acidic residues; it reads EPKKEEDEKFES. The segment covering 45 to 58 has biased composition (polar residues); the sequence is TYKQNENTQITPSS. The region spanning 91-230 is the Cyclin N-terminal domain; that stretch reads PSLVDGLSKE…RRILATLGFV (140 aa). A disordered region spans residues 368–480; that stretch reads KMAPDGEKST…ESSTPPRSRR (113 aa). 2 stretches are compositionally biased toward basic and acidic residues: residues 384 to 409 and 418 to 442; these read KDSRKVSPDRKNGTKDRGEADRGKKE and NDRDGRGDRRDRDKDRGDRRKDEKK. Basic residues predominate over residues 443–453; it reads DRRKRTRSRSR. Positions 454–472 are enriched in basic and acidic residues; it reads DRKDKNRNRDVGKRYRKES.

The protein belongs to the cyclin family.

Functionally, involved in pre-mRNA splicing. Functions in association with cyclin-dependent kinases (CDKs). Involved in induction of expression of heat shock protein hsp-16.2 in response to heat shock. Plays a role in male tail development, perhaps acting together with cell cycle regulators cdc-25.2, cdk-1, cyb-3, and cyd-1. This Caenorhabditis elegans protein is Cyclin L homolog cyl-1.